The primary structure comprises 127 residues: Large ribosomal subunit protein bL12 (127 aa).

Belongs to the bacterial ribosomal protein bL12 family. As to quaternary structure, homodimer. Part of the ribosomal stalk of the 50S ribosomal subunit. Forms a multimeric L10(L12)X complex, where L10 forms an elongated spine to which 2 to 4 L12 dimers bind in a sequential fashion. Binds GTP-bound translation factors.

Its function is as follows. Forms part of the ribosomal stalk which helps the ribosome interact with GTP-bound translation factors. Is thus essential for accurate translation. In Syntrophotalea carbinolica (strain DSM 2380 / NBRC 103641 / GraBd1) (Pelobacter carbinolicus), this protein is Large ribosomal subunit protein bL12.